The primary structure comprises 334 residues: Malate dehydrogenase, cytoplasmic (334 aa).

An N-acetylserine modification is found at S2. NAD(+)-binding positions include 11–17 and D42; that span reads GAAGQIA. Residues R92 and R98 each coordinate substrate. N105 provides a ligand contact to NAD(+). K110 is subject to N6-succinyllysine. Q112 contacts NAD(+). An N6-acetyllysine mark is found at K118 and K121. Residue 129-131 coordinates NAD(+); that stretch reads VGN. Positions 131 and 162 each coordinate substrate. The active-site Proton acceptor is the H187. The residue at position 214 (K214) is an N6-succinyllysine. At S217 the chain carries Phosphoserine. R230 carries the post-translational modification Omega-N-methylarginine. S241 carries the phosphoserine modification. Position 298 is an N6-acetyllysine; alternate (K298). At K298 the chain carries N6-succinyllysine; alternate. Residue S309 is modified to Phosphoserine. K318 bears the N6-succinyllysine mark. Position 333 is a phosphoserine (S333).

Belongs to the LDH/MDH superfamily. MDH type 2 family. As to quaternary structure, homodimer. Post-translationally, ISGylated. Acetylation at Lys-118 dramatically enhances enzymatic activity and promotes adipogenic differentiation.

Its subcellular location is the cytoplasm. The protein resides in the cytosol. It catalyses the reaction (S)-malate + NAD(+) = oxaloacetate + NADH + H(+). The catalysed reaction is (2R)-2-hydroxy-3-(4-hydroxyphenyl)propanoate + NAD(+) = 3-(4-hydroxyphenyl)pyruvate + NADH + H(+). It carries out the reaction (S)-2-hydroxyglutarate + NAD(+) = 2-oxoglutarate + NADH + H(+). Catalyzes the reduction of aromatic alpha-keto acids in the presence of NADH. Plays essential roles in the malate-aspartate shuttle and the tricarboxylic acid cycle, important in mitochondrial NADH supply for oxidative phosphorylation. Catalyzes the reduction of 2-oxoglutarate to 2-hydroxyglutarate, leading to elevated reactive oxygen species (ROS). In Bos taurus (Bovine), this protein is Malate dehydrogenase, cytoplasmic (MDH1).